We begin with the raw amino-acid sequence, 219 residues long: Ribosome maturation factor RimP (219 aa).

The segment at 195–219 (EGRIPGDDLGAEPEDVASTETQEKK) is disordered.

Belongs to the RimP family.

It is found in the cytoplasm. In terms of biological role, required for maturation of 30S ribosomal subunits. The chain is Ribosome maturation factor RimP from Brucella abortus (strain S19).